The sequence spans 269 residues: MVDMKQRILTGVLAAIVFLFLVIVGKLPFTILIYAMGSVALFELLRMKKLKLVSLPGLIGLLLLWMFLLPSQYSFFEADGISKMEIALFAVLLLLTYTVLVKNTFTFDEVGFITLAAIYIGMCFHYFIEIRNLDQYGLTYIFYACVVIWSTDSGAYFVGKSLGKRKLWPEISPNKTVEGFAGGIVIALVLATIFQLVAQLPIPYIYLLLITLFLSVFGQLGDLVESALKRHYDVKDSGNILPGHGGILDRFDSFLFVMPFLYFLLALFS.

Helical transmembrane passes span 13–33, 50–70, 81–101, 110–130, 138–158, 180–200, 201–221, and 247–267; these read LAAI…TILI, LKLV…FLLP, ISKM…TVLV, VGFI…FIEI, LTYI…AYFV, FAGG…VAQL, PIPY…GQLG, and ILDR…LLAL.

Belongs to the CDS family.

It localises to the cell membrane. The catalysed reaction is a 1,2-diacyl-sn-glycero-3-phosphate + CTP + H(+) = a CDP-1,2-diacyl-sn-glycerol + diphosphate. It participates in phospholipid metabolism; CDP-diacylglycerol biosynthesis; CDP-diacylglycerol from sn-glycerol 3-phosphate: step 3/3. This Bacillus subtilis (strain 168) protein is Phosphatidate cytidylyltransferase (cdsA).